We begin with the raw amino-acid sequence, 499 residues long: Ent-kaurenoic acid oxidase 1 (499 aa).

The chain crosses the membrane as a helical span at residues 5 to 25; the sequence is AWWAVAAVVAALAVVALDAAV. Cys443 provides a ligand contact to heme.

Belongs to the cytochrome P450 family. It depends on heme as a cofactor.

The protein resides in the endoplasmic reticulum membrane. It catalyses the reaction ent-kaur-16-en-19-oate + 3 reduced [NADPH--hemoprotein reductase] + 3 O2 = gibberellin A12 + 3 oxidized [NADPH--hemoprotein reductase] + 4 H2O + 4 H(+). The enzyme catalyses ent-kaur-16-en-19-oate + reduced [NADPH--hemoprotein reductase] + O2 = ent-7alpha-hydroxykaur-16-en-19-oate + oxidized [NADPH--hemoprotein reductase] + H2O + H(+). The catalysed reaction is ent-7alpha-hydroxykaur-16-en-19-oate + reduced [NADPH--hemoprotein reductase] + O2 = gibberellin A12 aldehyde + oxidized [NADPH--hemoprotein reductase] + 2 H2O + H(+). It carries out the reaction gibberellin A12 aldehyde + reduced [NADPH--hemoprotein reductase] + O2 = gibberellin A12 + oxidized [NADPH--hemoprotein reductase] + H2O + 2 H(+). It functions in the pathway plant hormone biosynthesis; gibberellin biosynthesis. In terms of biological role, catalyzes three successive oxidations of ent-kaurenoic acid giving gibberellin 12 (GA12), a key step in gibberellins (GAs) biosynthesis. GAs, which are involved many processes, including stem elongation, play a central role in plant development. The protein is Ent-kaurenoic acid oxidase 1 of Hordeum vulgare (Barley).